The sequence spans 399 residues: Glutathione-independent formaldehyde dehydrogenase (399 aa).

Cysteine 47 is a Zn(2+) binding site. Residues glycine 48, serine 49, and histidine 52 each contribute to the NAD(+) site. Zn(2+) is bound by residues histidine 68, cysteine 98, cysteine 101, cysteine 104, cysteine 112, and aspartate 170. NAD(+)-binding residues include valine 198, aspartate 218, arginine 223, valine 263, arginine 268, histidine 270, proline 300, leucine 302, glycine 337, and threonine 339.

Belongs to the zinc-containing alcohol dehydrogenase family. In terms of assembly, homotetramer. Requires Zn(2+) as cofactor.

It catalyses the reaction formaldehyde + NAD(+) + H2O = formate + NADH + 2 H(+). It carries out the reaction acetaldehyde + NAD(+) + H2O = acetate + NADH + 2 H(+). The enzyme catalyses 2 formaldehyde + H2O = methanol + formate + H(+). Inactivated by bipyridine and p-chloromercuribenzoate. Dehydrogenase that catalyzes the NAD(+)-dependent oxidation of formaldehyde and acetaldehyde, and, to a lesser extent, long-chain alcohols, but is inactive against propionaldehyde, butyraldehyde, methanol and ethanol. Can also catalyze the dismutation of a wide range of aldehydes such as formaldehyde. This Pseudomonas putida (Arthrobacter siderocapsulatus) protein is Glutathione-independent formaldehyde dehydrogenase.